Consider the following 878-residue polypeptide: Phosphoenolpyruvate carboxylase (878 aa).

Active-site residues include histidine 140 and lysine 545.

This sequence belongs to the PEPCase type 1 family. The cofactor is Mg(2+).

The enzyme catalyses oxaloacetate + phosphate = phosphoenolpyruvate + hydrogencarbonate. In terms of biological role, forms oxaloacetate, a four-carbon dicarboxylic acid source for the tricarboxylic acid cycle. This Pseudomonas syringae pv. tomato (strain ATCC BAA-871 / DC3000) protein is Phosphoenolpyruvate carboxylase.